The chain runs to 448 residues: Acyl-lipid (9-3)-desaturase (448 aa).

Residues 6 to 90 enclose the Cytochrome b5 heme-binding domain; that stretch reads KKYITSDELK…LKDYSVSEVS (85 aa). The heme site is built by His41 and His64. 2 helical membrane-spanning segments follow: residues 112 to 132 and 137 to 157; these read IMFA…YGVL and VLVH…SGWI. Residues 159 to 163 carry the Histidine box-1 motif; it reads HDAGH. A helical transmembrane segment spans residues 172 to 192; the sequence is LNKFMGIFAANCLSGISIGWW. The Histidine box-2 signature appears at 196-200; that stretch reads HNAHH. Helical transmembrane passes span 212–232, 254–274, and 286–306; these read LQYI…TSHF, FYPI…IMLL, and LLGC…LPNW. Positions 373-377 match the Histidine box-3 motif; that stretch reads QIEHH.

This sequence belongs to the fatty acid desaturase type 1 family.

The protein resides in the endoplasmic reticulum membrane. The enzyme catalyses (9Z,12Z,15Z)-octadecatrienoyl-containing glycerolipid + 2 Fe(II)-[cytochrome b5] + O2 + 2 H(+) = (6Z,9Z,12Z,15Z)-octadecatetraenoyl-containing glycerolipid + 2 Fe(III)-[cytochrome b5] + 2 H2O. It catalyses the reaction a (9Z,12Z)-octadecadienoyl-containing glycerolipid + 2 Fe(II)-[cytochrome b5] + O2 + 2 H(+) = (6Z,9Z,12Z)-octadecatrienoyl-containing glycerolipid + 2 Fe(III)-[cytochrome b5] + 2 H2O. The protein operates within lipid metabolism; polyunsaturated fatty acid biosynthesis. In terms of biological role, fatty acid desaturase able to introduce a delta(6)-double bond into delta(9)-unsaturated fatty-acid substrates. Can use both linoleic acid (18:2(9Z,12Z)) and alpha-linolenic acid (18:3(9Z,12Z,15Z)) as substrates. This Borago officinalis (Bourrache) protein is Acyl-lipid (9-3)-desaturase.